Reading from the N-terminus, the 115-residue chain is Large ribosomal subunit protein bL31B (115 aa).

This sequence belongs to the bacterial ribosomal protein bL31 family. Type B subfamily. In terms of assembly, part of the 50S ribosomal subunit.

The sequence is that of Large ribosomal subunit protein bL31B from Polynucleobacter asymbioticus (strain DSM 18221 / CIP 109841 / QLW-P1DMWA-1) (Polynucleobacter necessarius subsp. asymbioticus).